The following is a 160-amino-acid chain: 3-hydroxyacyl-[acyl-carrier-protein] dehydratase FabZ (160 aa).

The active site involves His63.

It belongs to the thioester dehydratase family. FabZ subfamily.

It localises to the cytoplasm. It carries out the reaction a (3R)-hydroxyacyl-[ACP] = a (2E)-enoyl-[ACP] + H2O. In terms of biological role, involved in unsaturated fatty acids biosynthesis. Catalyzes the dehydration of short chain beta-hydroxyacyl-ACPs and long chain saturated and unsaturated beta-hydroxyacyl-ACPs. The protein is 3-hydroxyacyl-[acyl-carrier-protein] dehydratase FabZ of Xylella fastidiosa (strain 9a5c).